Consider the following 219-residue polypeptide: Transcriptional activator protein rep2 (219 aa).

The segment at 177–197 (CSKCNTTFNHSTALMMHEATC) is a zinc-finger region.

Functionally, transcriptional activator which interacts with the mcb binding subunit complex formed by res2 and cdc10. Rep2 is required for the mitotic cell cycle start. This chain is Transcriptional activator protein rep2 (rep2), found in Schizosaccharomyces pombe (strain 972 / ATCC 24843) (Fission yeast).